The primary structure comprises 152 residues: Large ribosomal subunit protein uL13 (152 aa).

It belongs to the universal ribosomal protein uL13 family. Part of the 50S ribosomal subunit.

Its function is as follows. This protein is one of the early assembly proteins of the 50S ribosomal subunit, although it is not seen to bind rRNA by itself. It is important during the early stages of 50S assembly. The sequence is that of Large ribosomal subunit protein uL13 from Wolbachia pipientis subsp. Culex pipiens (strain wPip).